The primary structure comprises 157 residues: Large ribosomal subunit protein uL15 (157 aa).

Residues 1–56 form a disordered region; the sequence is MRLEDIRPQPGSTRRRRRLGRGIAAGQGASCGKGMRGQKARKGGGPRPGFEGGQTP. A compositionally biased stretch (gly residues) spans 23–35; the sequence is IAAGQGASCGKGM.

It belongs to the universal ribosomal protein uL15 family. As to quaternary structure, part of the 50S ribosomal subunit.

Functionally, binds to the 23S rRNA. In Synechococcus sp. (strain JA-3-3Ab) (Cyanobacteria bacterium Yellowstone A-Prime), this protein is Large ribosomal subunit protein uL15.